A 371-amino-acid chain; its full sequence is Terpene cyclase 6 (371 aa).

Asp-144, Asn-266, Ser-270, and Glu-274 together coordinate Mg(2+). A D(D/E)XX(D/E) motif motif is present at residues 144–148 (DDVME). An NSE motif motif is present at residues 266–274 (NDLYSYDKE). The WxxxxxRY motif motif lies at 352–359 (HHATLGRY). Positions 358 and 359 each coordinate (2E,6E)-farnesyl diphosphate.

Belongs to the terpene synthase family. Homodimer. It depends on Mg(2+) as a cofactor.

It carries out the reaction (2E,6E)-farnesyl diphosphate + H2O = (-)-alpha-acorenol + diphosphate. Its pathway is sesquiterpene biosynthesis. Terpene cyclase that catalyzes the cyclization of farnesyl diphosphate (FPP) to the spirocyclic sesquiterpene alpha-acorenol. This Gibberella fujikuroi (strain CBS 195.34 / IMI 58289 / NRRL A-6831) (Bakanae and foot rot disease fungus) protein is Terpene cyclase 6.